The sequence spans 80 residues: Acyl carrier protein (80 aa).

Residues 1 to 76 (MTLEEKIIEI…DVIDYLKVRN (76 aa)) form the Carrier domain. An O-(pantetheine 4'-phosphoryl)serine modification is found at Ser-36.

The protein belongs to the acyl carrier protein (ACP) family. 4'-phosphopantetheine is transferred from CoA to a specific serine of apo-ACP by AcpS. This modification is essential for activity because fatty acids are bound in thioester linkage to the sulfhydryl of the prosthetic group.

The protein resides in the cytoplasm. It functions in the pathway lipid metabolism; fatty acid biosynthesis. Functionally, carrier of the growing fatty acid chain in fatty acid biosynthesis. The sequence is that of Acyl carrier protein from Syntrophus aciditrophicus (strain SB).